The following is a 460-amino-acid chain: Probable lipase C14C8.15 (460 aa).

At 1-16 (MTLNGNIMKYCLEKGE) the chain is on the cytoplasmic side. Residues 17-37 (ILISFLLIALESMFRICTVIL) form a helical; Signal-anchor for type II membrane protein membrane-spanning segment. At 38 to 460 (PSPLRNWFYE…LVDGVMNHTI (423 aa)) the chain is on the lumenal side. Ser-214 acts as the Nucleophile in catalysis. Asn-308 carries an N-linked (GlcNAc...) asparagine glycan. Residues Asp-382 and His-408 each act as charge relay system in the active site. The N-linked (GlcNAc...) asparagine glycan is linked to Asn-457.

This sequence belongs to the AB hydrolase superfamily. Lipase family.

The protein localises to the golgi apparatus. The protein resides in the membrane. Its function is as follows. Probable lipase. The polypeptide is Probable lipase C14C8.15 (Schizosaccharomyces pombe (strain 972 / ATCC 24843) (Fission yeast)).